Here is a 312-residue protein sequence, read N- to C-terminus: Putative mitochondrial transporter UCP3 (312 aa).

Residues 1 to 10 (MVGLKPSDVP) lie on the Mitochondrial intermembrane side of the membrane. A helical transmembrane segment spans residues 11–32 (PTMAVKFLGAGTAACFADLVTF). Solcar repeat units follow at residues 11–105 (PTMA…VKQV), 114–206 (SSLT…LKEK), and 215–300 (DNFP…LKRA). Residues 33 to 76 (PLDTAKVRLQIQGENQAVQTARLVQYRGVLGTILTMVRTEGPCS) are Mitochondrial matrix-facing. The helical transmembrane segment at 77 to 99 (PYNGLVAGLQRQMSFASIRIGLY) threads the bilayer. At 100-119 (DSVKQVYTPKGADNSSLTTR) the chain is on the mitochondrial intermembrane side. The helical transmembrane segment at 120 to 136 (ILAGCTTGAMAVTCAQP) threads the bilayer. Residues 137–183 (TDVVKVRFQASIHLGPSRSDRKYSGTMDAYRTIAREEGVRGLWKGTL) are Mitochondrial matrix-facing. A helical transmembrane segment spans residues 184 to 200 (PNIMRNAIVNCAEVVTY). Over 201 to 217 (DILKEKLLDYHLLTDNF) the chain is Mitochondrial intermembrane. A helical membrane pass occupies residues 218–237 (PCHFVSAFGAGFCATVVASP). Over 238 to 271 (VDVVKTRYMNSPPGQYFSPLDCMIKMVAQEGPTA) the chain is Mitochondrial matrix. The chain crosses the membrane as a helical span at residues 272–294 (FYKGFTPSFLRLGSWNVVMFVTY). Positions 279–301 (SFLRLGSWNVVMFVTYEQLKRAL) are purine nucleotide binding. Residues 295–312 (EQLKRALMKVQMLRESPF) lie on the Mitochondrial intermembrane side of the membrane.

It belongs to the mitochondrial carrier (TC 2.A.29) family. In terms of assembly, interacts with HAX1; the interaction is direct and calcium-dependent. In terms of tissue distribution, only in skeletal muscle and heart. Also expressed in white and brown adipose tissues. Is more expressed in glycolytic than in oxidative skeletal muscles.

The protein resides in the mitochondrion inner membrane. With respect to regulation, the proton transporter activity is activated by fatty acids (in vitro). The proton transporter activity is inhibited by ATP and ADP (in vitro). The effect of Ubiquinone/coenzyme Q10 on the proton transporter activity in reconstituted membranes is unclear (in vitro). Functionally, putative transmembrane transporter that plays a role in mitochondrial metabolism via an as yet unclear mechanism. Originally, this mitochondrial protein was thought to act as a proton transmembrane transporter from the mitochondrial intermembrane space into the matrix, causing proton leaks through the inner mitochondrial membrane, thereby uncoupling mitochondrial membrane potential generation from ATP synthesis. However, this function is controversial and uncoupling may not be the function, or at least not the main function, but rather a consequence of more conventional metabolite transporter activity. The sequence is that of Putative mitochondrial transporter UCP3 from Homo sapiens (Human).